Consider the following 222-residue polypeptide: Large ribosomal subunit protein mL64 (222 aa).

Disordered stretches follow at residues Met1–Gln51, Arg136–Pro170, and Leu182–Ser222. Positions Ala141–Pro170 are enriched in basic and acidic residues. Residues Glu144–Asp213 are a coiled coil. Residues Lys184–Glu200 carry the Nuclear localization signal motif. Over residues Ala203–Gln212 the composition is skewed to low complexity.

It belongs to the mitochondrion-specific ribosomal protein mL64 family. Component of the mitochondrial ribosome large subunit (39S) which comprises a 16S rRNA and about 50 distinct proteins. Interacts with GADD45A, GADD45B and GADD45G. Interacts with NR4A1 via the NR4A1 AB domain. Interacts with ATAD3A and ATAD3B.

The protein resides in the mitochondrion. It is found in the nucleus. Its function is as follows. Acts as a negative regulator of G1 to S cell cycle phase progression by inhibiting cyclin-dependent kinases. Inhibitory effects are additive with GADD45 proteins but also occur in the absence of GADD45 proteins. Acts as a repressor of the orphan nuclear receptor NR4A1 by inhibiting AB domain-mediated transcriptional activity. May be involved in the hormone-mediated regulation of NR4A1 transcriptional activity. May play a role in mitochondrial protein synthesis. This chain is Large ribosomal subunit protein mL64 (GADD45GIP1), found in Bos taurus (Bovine).